Reading from the N-terminus, the 470-residue chain is Shutoff alkaline exonuclease (470 aa).

Belongs to the herpesviridae alkaline nuclease family. As to quaternary structure, forms a complex with the DNA polymerase, the DNA polymerase processivity factor, and the major DNA binding protein.

It is found in the host nucleus. It localises to the host cytoplasm. In terms of biological role, plays a role in processing non linear or branched viral DNA intermediates in order to promote the production of mature packaged unit-length linear progeny viral DNA molecules. Exhibits endonuclease and exonuclease activities and accepts both double-stranded and single-stranded DNA as substrate. Exonuclease digestion of DNA is in the 5'-&gt; 3' direction and the products are 5'-monophosphate nucleosides. Additionally, forms a recombinase with the major DNA-binding protein, which displays strand exchange activity. Also acts as a cytoplasmic RNA endonuclease that induces degradation of the majority of the cellular messenger RNAs during early lytic infection. The resulting inhibition of cellular protein synthesis serves to ensure maximal viral gene expression and evasion from host immune response. Internally cleaves host mRNAs which are then degraded by the cellular exonuclease XRN1. Bypasses therefore the regulatory steps of deadenylation and decapping normally required for XRN1 activation. In Epstein-Barr virus (strain GD1) (HHV-4), this protein is Shutoff alkaline exonuclease.